Consider the following 194-residue polypeptide: Ras-related protein Rab-22A (194 aa).

12–20 (GDTGVGKSS) serves as a coordination point for GTP. The Effector region motif lies at 34–42 (INPTIGASF). GTP-binding positions include 60–64 (DTAGQ), 118–121 (NKCD), and 148–150 (SAK). The tract at residues 174 to 194 (PSGGKGFKLRRQPSEPKRSCC) is disordered. Basic and acidic residues predominate over residues 185 to 194 (QPSEPKRSCC). 2 S-geranylgeranyl cysteine lipidation sites follow: cysteine 193 and cysteine 194.

Belongs to the small GTPase superfamily. Rab family. As to quaternary structure, interacts directly with ZFYVE20. Binds EEA1. Interacts (in its GTP-bound form) with RABGEF1. Interacts (in its GTP-bound form) with RINL.

The protein localises to the endosome membrane. It is found in the cell membrane. Its subcellular location is the early endosome. The protein resides in the late endosome. It localises to the cell projection. The protein localises to the ruffle. It is found in the cytoplasmic vesicle. Its subcellular location is the phagosome. The protein resides in the phagosome membrane. Functionally, plays a role in endocytosis and intracellular protein transport. Mediates trafficking of TF from early endosomes to recycling endosomes. Required for NGF-mediated endocytosis of NTRK1, and subsequent neurite outgrowth. Binds GTP and GDP and has low GTPase activity. Alternates between a GTP-bound active form and a GDP-bound inactive form. In Homo sapiens (Human), this protein is Ras-related protein Rab-22A (RAB22A).